The following is a 201-amino-acid chain: Probable molybdenum cofactor guanylyltransferase (201 aa).

Residues 16–18, K28, D75, and D107 each bind GTP; that span reads LAG. D107 is a Mg(2+) binding site.

The protein belongs to the MobA family. Mg(2+) serves as cofactor.

It localises to the cytoplasm. The catalysed reaction is Mo-molybdopterin + GTP + H(+) = Mo-molybdopterin guanine dinucleotide + diphosphate. Transfers a GMP moiety from GTP to Mo-molybdopterin (Mo-MPT) cofactor (Moco or molybdenum cofactor) to form Mo-molybdopterin guanine dinucleotide (Mo-MGD) cofactor. In Mycobacterium ulcerans (strain Agy99), this protein is Probable molybdenum cofactor guanylyltransferase.